The following is a 345-amino-acid chain: NADPH dehydrogenase (345 aa).

23-26 is an FMN binding site; that stretch reads SPMC. Tyr-28 lines the substrate pocket. Ala-60 and Gln-102 together coordinate FMN. A substrate-binding site is contributed by 164 to 167; that stretch reads HGAH. Residues Arg-215 and 307-308 contribute to the FMN site; that span reads GR.

Belongs to the NADH:flavin oxidoreductase/NADH oxidase family. NamA subfamily. In terms of assembly, homotetramer. Requires FMN as cofactor.

It catalyses the reaction A + NADPH + H(+) = AH2 + NADP(+). Its function is as follows. Catalyzes the reduction of the double bond of an array of alpha,beta-unsaturated aldehydes and ketones. It also reduces the nitro group of nitroester and nitroaromatic compounds. It could have a role in detoxification processes. The polypeptide is NADPH dehydrogenase (Bacillus cereus (strain Q1)).